The chain runs to 530 residues: Autoinducer-2 kinase (530 aa).

The protein belongs to the FGGY kinase family.

The protein resides in the cytoplasm. The catalysed reaction is (S)-4,5-dihydroxypentane-2,3-dione + ATP = (2S)-2-hydroxy-3,4-dioxopentyl phosphate + ADP + H(+). Catalyzes the phosphorylation of autoinducer-2 (AI-2) to phospho-AI-2, which subsequently inactivates the transcriptional regulator LsrR and leads to the transcription of the lsr operon. Phosphorylates the ring-open form of (S)-4,5-dihydroxypentane-2,3-dione (DPD), which is the precursor to all AI-2 signaling molecules, at the C5 position. This is Autoinducer-2 kinase from Yersinia pestis bv. Antiqua (strain Angola).